The primary structure comprises 468 residues: Glutamate--tRNA ligase (468 aa).

A 'HIGH' region motif is present at residues Pro10–Gly20. Residues Lys252 to Arg256 carry the 'KMSKS' region motif. Lys255 serves as a coordination point for ATP.

Belongs to the class-I aminoacyl-tRNA synthetase family. Glutamate--tRNA ligase type 1 subfamily. Monomer.

The protein resides in the cytoplasm. It carries out the reaction tRNA(Glu) + L-glutamate + ATP = L-glutamyl-tRNA(Glu) + AMP + diphosphate. Functionally, catalyzes the attachment of glutamate to tRNA(Glu) in a two-step reaction: glutamate is first activated by ATP to form Glu-AMP and then transferred to the acceptor end of tRNA(Glu). The chain is Glutamate--tRNA ligase from Mycoplasmopsis pulmonis (strain UAB CTIP) (Mycoplasma pulmonis).